The following is a 400-amino-acid chain: Phosphoglycerate kinase (400 aa).

Residues 21–23 (DFN), arginine 36, 59–62 (HCSR), arginine 118, and arginine 151 contribute to the substrate site. Residues lysine 201, glutamate 323, and 353–356 (GGDT) each bind ATP.

It belongs to the phosphoglycerate kinase family. In terms of assembly, monomer.

The protein localises to the cytoplasm. The catalysed reaction is (2R)-3-phosphoglycerate + ATP = (2R)-3-phospho-glyceroyl phosphate + ADP. The protein operates within carbohydrate degradation; glycolysis; pyruvate from D-glyceraldehyde 3-phosphate: step 2/5. This is Phosphoglycerate kinase from Bartonella bacilliformis (strain ATCC 35685 / KC583 / Herrer 020/F12,63).